Reading from the N-terminus, the 144-residue chain is Large ribosomal subunit protein uL15 (144 aa).

The disordered stretch occupies residues 1-57 (MLLNTLSPAAGSKHAPKRLGRGVGSGLGKTGGRGHKGQKSRSGGKVRPGFEGGQMPL). Gly residues predominate over residues 21–31 (RGVGSGLGKTG). Basic residues predominate over residues 32–44 (GRGHKGQKSRSGG).

Belongs to the universal ribosomal protein uL15 family. In terms of assembly, part of the 50S ribosomal subunit.

Its function is as follows. Binds to the 23S rRNA. In Vibrio cholerae serotype O1 (strain ATCC 39541 / Classical Ogawa 395 / O395), this protein is Large ribosomal subunit protein uL15.